The sequence spans 639 residues: Protein zwilch homolog (639 aa).

The segment covering 76–95 (QKTSSLLNRRENKKTIKSEK) has biased composition (basic and acidic residues). Positions 76–116 (QKTSSLLNRRENKKTIKSEKEDESMDMETAEGDKENTVSET) are disordered. Residues 96–105 (EDESMDMETA) are compositionally biased toward acidic residues.

The protein belongs to the ZWILCH family. Component of the RZZ complex composed of rod-1, czw-1 and zwl-1. Interacts with the spindly-like protein spdl-1. Interacts with NDC80 complex component ndc-80.

It is found in the cytoplasm. Its subcellular location is the cell cortex. The protein localises to the chromosome. It localises to the centromere. The protein resides in the kinetochore. It is found in the cytoskeleton. Its subcellular location is the spindle. Its function is as follows. Essential component of the mitotic checkpoint, which prevents cells from prematurely exiting mitosis. Required for chromosome segregation, the assembly of the dynein-dynactin and mdf-1-mdf-2 complexes onto kinetochores and spindle pole separation. Its function related to the spindle assembly machinery and kinetochore-microtubule attachments likely depends on its association in the mitotic RZZ complex. The RZZ complex recruits the spindly-like protein spdl-1 to kinetochores. To prevent irregular chromosome segregation, the complex also inhibits the attachment of the kinetochore-associated NDC80 complex to microtubules. The recruitment of spdl-1 to kinetochores relieves this inhibition. Required for embryonic development. The protein is Protein zwilch homolog (zwl-1) of Caenorhabditis briggsae.